We begin with the raw amino-acid sequence, 123 residues long: T-complex protein 1 subunit alpha (123 aa).

ADP is bound at residue Gly-68.

The protein belongs to the TCP-1 chaperonin family. Component of the chaperonin-containing T-complex (TRiC), a hexadecamer composed of two identical back-to-back stacked rings enclosing a protein folding chamber. Each ring is made up of eight different subunits: TCP1/CCT1, CCT2, CCT3, CCT4, CCT5, CCT6A/CCT6, CCT7, CCT8. Interacts with PACRG. Interacts with GBA1. Interacts with DLEC1.

It is found in the cytoplasm. Its subcellular location is the cytosol. The protein resides in the cytoskeleton. The protein localises to the microtubule organizing center. It localises to the centrosome. It carries out the reaction ATP + H2O = ADP + phosphate + H(+). In terms of biological role, component of the chaperonin-containing T-complex (TRiC), a molecular chaperone complex that assists the folding of actin, tubulin and other proteins upon ATP hydrolysis. The TRiC complex mediates the folding of WRAP53/TCAB1, thereby regulating telomere maintenance. As part of the TRiC complex may play a role in the assembly of BBSome, a complex involved in ciliogenesis regulating transports vesicles to the cilia. The chain is T-complex protein 1 subunit alpha from Mesocricetus auratus (Golden hamster).